We begin with the raw amino-acid sequence, 57 residues long: DNA-directed RNA polymerase subunit Rpo6 (57 aa).

It belongs to the archaeal Rpo6/eukaryotic RPB6 RNA polymerase subunit family. In terms of assembly, part of the RNA polymerase complex.

Its subcellular location is the cytoplasm. The enzyme catalyses RNA(n) + a ribonucleoside 5'-triphosphate = RNA(n+1) + diphosphate. Functionally, DNA-dependent RNA polymerase (RNAP) catalyzes the transcription of DNA into RNA using the four ribonucleoside triphosphates as substrates. The polypeptide is DNA-directed RNA polymerase subunit Rpo6 (Thermococcus gammatolerans (strain DSM 15229 / JCM 11827 / EJ3)).